A 686-amino-acid chain; its full sequence is Thymidine kinase (686 aa).

Over residues 1–14 the composition is skewed to polar residues; that stretch reads MASNSHNNYNTPRR. Disordered regions lie at residues 1 to 21 and 64 to 85; these read MASN…DVPK and NPGL…PSSD. 243–250 contributes to the ATP binding site; sequence GCMAAGKT. The active-site Proton acceptor is E270. Substrate is bound at residue Q308. An ATP-binding site is contributed by R398. R404 contributes to the substrate binding site.

The protein belongs to the herpesviridae thymidine kinase family. As to quaternary structure, homodimer.

It carries out the reaction thymidine + ATP = dTMP + ADP + H(+). Catalyzes the transfer of the gamma-phospho group of ATP to thymidine to generate dTMP in the salvage pathway of pyrimidine synthesis. The dTMP serves as a substrate for DNA polymerase during viral DNA replication. Allows the virus to be reactivated and to grow in non-proliferative cells lacking a high concentration of phosphorylated nucleic acid precursors. In Alcelaphine herpesvirus 1 (strain WC11) (AlHV-1), this protein is Thymidine kinase.